Reading from the N-terminus, the 179-residue chain is Large ribosomal subunit protein uL5 (179 aa).

Belongs to the universal ribosomal protein uL5 family. Part of the 50S ribosomal subunit; part of the 5S rRNA/L5/L18/L25 subcomplex. Contacts the 5S rRNA and the P site tRNA. Forms a bridge to the 30S subunit in the 70S ribosome.

Functionally, this is one of the proteins that bind and probably mediate the attachment of the 5S RNA into the large ribosomal subunit, where it forms part of the central protuberance. In the 70S ribosome it contacts protein S13 of the 30S subunit (bridge B1b), connecting the 2 subunits; this bridge is implicated in subunit movement. Contacts the P site tRNA; the 5S rRNA and some of its associated proteins might help stabilize positioning of ribosome-bound tRNAs. The sequence is that of Large ribosomal subunit protein uL5 from Photorhabdus laumondii subsp. laumondii (strain DSM 15139 / CIP 105565 / TT01) (Photorhabdus luminescens subsp. laumondii).